We begin with the raw amino-acid sequence, 406 residues long: Glycosyltransferase GlyE (406 aa).

Residues 3 to 265 (NTKRAVVFAG…SVILNEWFSK (263 aa)) are GT8 domain. Residues 11–16 (AGDYAY) and 106–107 (DS) each bind UDP. Mn(2+)-binding residues include Asp106, Asp108, and His227. 227 to 233 (HYISQDK) lines the UDP pocket.

This sequence in the N-terminal section; belongs to the glycosyltransferase 8 family. It depends on Mn(2+) as a cofactor.

The protein operates within protein modification; protein glycosylation. Functionally, involved in the polymorphic O-glycosylation of the serine-rich repeat protein PsrP. Catalyzes the third step in glycosylation of PsrP in this bacteria. Transfers galactose from UDP-galactose to the terminal glucose moiety of already-glycosylated PsrP (using the short substrate PsrP-GlcNAc-Glc). Has a very marked preference for PsrP substrate that has already been modified by GlcNAc and glucose. Has hydrolytic activity against UDP-galactose but none against UDP-glucose. Also catalyzes the fourth step in glycosylation of PsrP in this bacteria. Can transfer the sugar from UDP-galactose to the terminal sugar moiety of PsrP-GlcNAc-Glc-Glc and of PsrP-GlcNAc-Glc-Gal. This is Glycosyltransferase GlyE from Streptococcus pneumoniae serotype 4 (strain ATCC BAA-334 / TIGR4).